The chain runs to 855 residues: Beclin-1-like protein B (855 aa).

4 disordered regions span residues 92–212, 236–271, 294–380, and 407–475; these read FGKR…GSLS, LVAD…ESNN, ATIP…QKPR, and VDGG…QQQP. Low complexity-rich tracts occupy residues 99–123 and 131–143; these read TQSN…SLSL and QQQQ…QQQT. Over residues 144–156 the composition is skewed to polar residues; the sequence is FNDQSKLTATTPT. A compositionally biased stretch (low complexity) spans 177–200; it reads HSNNSSNGSDHGGNVNTTGVSPSS. Positions 294-348 are enriched in low complexity; that stretch reads ATIPTTTTTSTPTTPSTVGGTTPSPPSSSSSSSSSSSVITSPISRISPSNITSPS. Composition is skewed to polar residues over residues 368 to 377 and 413 to 445; these read LNISQVSSPQ and SGTE…TTPP. Residues 446-474 are compositionally biased toward low complexity; sequence LLSNSMNNSTNNLQSLQQQQQQQQQQQQQ. Residues 538 to 595 adopt a coiled-coil conformation; the sequence is EKGKTEEDLEELGKEMTLLCEEEEQLRLMIENTHQERKEVEQLTLQLQDRIATLKSLE. The interval 826–855 is disordered; it reads LNNNQNNNNINNNNNNNINNNNNNNVNKRN.

It belongs to the beclin family.

Its subcellular location is the endosome membrane. Functionally, involved in autophagy. May be required to recruit the atg8-phosphatidylinositol conjugate and the atg12-atg5 conjugate to the pre-autophagosomal structure. The polypeptide is Beclin-1-like protein B (atg6B) (Dictyostelium discoideum (Social amoeba)).